The chain runs to 338 residues: Phenylalanine--tRNA ligase alpha subunit (338 aa).

Residue Glu252 coordinates Mg(2+).

This sequence belongs to the class-II aminoacyl-tRNA synthetase family. Phe-tRNA synthetase alpha subunit type 1 subfamily. Tetramer of two alpha and two beta subunits. The cofactor is Mg(2+).

It is found in the cytoplasm. The catalysed reaction is tRNA(Phe) + L-phenylalanine + ATP = L-phenylalanyl-tRNA(Phe) + AMP + diphosphate + H(+). The polypeptide is Phenylalanine--tRNA ligase alpha subunit (Ectopseudomonas mendocina (strain ymp) (Pseudomonas mendocina)).